Reading from the N-terminus, the 623-residue chain is Zona pellucida sperm-binding protein 1 (623 aa).

The signal sequence occupies residues 1-20 (MAWGCFVVLLLLAAAPLRLG). Q21 carries the post-translational modification Pyrrolidone carboxylic acid. Residues 21–590 (QRLHLEPGFE…GSSRNSSSRM (570 aa)) lie on the Extracellular side of the membrane. N49 and N68 each carry an N-linked (GlcNAc...) asparagine glycan. Positions 182 to 201 (IHPTPAPPSLGPGPAGSTVP) are disordered. The 41-residue stretch at 226–266 (ERCQVASGHIPCMVNGSSKETCQQAGCCYDSTKEEPCYYGN) folds into the P-type domain. 3 disulfides stabilise this stretch: C228/C253, C237/C252, and C247/C262. An N-linked (GlcNAc...) asparagine glycan is attached at N240. Residues 271–542 (QCFKSGYFTL…DTCSTTCDSG (272 aa)) enclose the ZP domain. The N-linked (GlcNAc...) asparagine glycan is linked to N371. A disulfide bond links C449 and C470. Positions 547–623 (RRSSGHHNIT…AQKLWEGIRY (77 aa)) are cleaved as a propeptide — removed in mature form. N-linked (GlcNAc...) asparagine glycosylation is found at N554 and N585. A helical membrane pass occupies residues 591–611 (LLLLLAITLALAAGIFVGLIW). Topologically, residues 612 to 623 (AWAQKLWEGIRY) are cytoplasmic.

This sequence belongs to the ZP domain family. ZPB subfamily. Polymers of ZP2 and ZP3 organized into long filaments cross-linked by ZP1 homodimers. Interacts with ZP3. Proteolytically cleaved before the transmembrane segment to yield the secreted ectodomain incorporated in the zona pellucida. In terms of processing, O-glycosylated. In terms of tissue distribution, expressed in oocytes.

The protein resides in the zona pellucida. Its subcellular location is the cell membrane. Component of the zona pellucida, an extracellular matrix surrounding oocytes which mediates sperm binding, induction of the acrosome reaction and prevents post-fertilization polyspermy. The zona pellucida is composed of 3 to 4 glycoproteins, ZP1, ZP2, ZP3, and ZP4. ZP1 ensures the structural integrity of the zona pellucida. The sequence is that of Zona pellucida sperm-binding protein 1 (Zp1) from Mus musculus (Mouse).